The primary structure comprises 496 residues: MFYAFKDFEKKETLLIGLFKKSRLYGKAEEIDRLLNGQLSQLLKDGDVSSKKAKVSKIFTPSLQGVKRIYIVGLGREAEFTFEDAKQCFAEAVQLIHKDRKQELTVMLDSFVSEEVPAADAAHALAESCMLSCYEVQDYKHRSNVPDQCLQSVYVLTDHDLKEIQASLHVGQVYGNATNSARTLVNMPGNMLTAADLASYAAELAAKYEFECEILEKAEMEELGMGGLLAVNQGSEEPPKMIVLKYQGKETWDDVIGLVGKGITFDTGGYSIKTKSGIVGMKSDMGGAASVLGAMEAIGELRPEQNVLAVIPSTDNMISGSAMKPDDVIVSLSGKTIEILNTDAEGRLALADGLTYAKHHGASVLIDVATLTGGVVVALGTETTGAMTNHDPLYQQVRQAAEEAGEAIWQLPITEKDKKRVKNSQMADLNNSPGREGHAIMAGTFLGEFAEQTPWVHLDIAGTATTAQNSCFGPKGGTGVMVRTLVTFVERFSGNL.

Mn(2+) contacts are provided by Lys-261 and Asp-266. The active site involves Lys-273. Residues Asp-284, Asp-343, and Glu-345 each contribute to the Mn(2+) site. Residue Arg-347 is part of the active site.

The protein belongs to the peptidase M17 family. It depends on Mn(2+) as a cofactor.

It is found in the cytoplasm. The enzyme catalyses Release of an N-terminal amino acid, Xaa-|-Yaa-, in which Xaa is preferably Leu, but may be other amino acids including Pro although not Arg or Lys, and Yaa may be Pro. Amino acid amides and methyl esters are also readily hydrolyzed, but rates on arylamides are exceedingly low.. The catalysed reaction is Release of an N-terminal amino acid, preferentially leucine, but not glutamic or aspartic acids.. In terms of biological role, presumably involved in the processing and regular turnover of intracellular proteins. Catalyzes the removal of unsubstituted N-terminal amino acids from various peptides. In Bacillus licheniformis (strain ATCC 14580 / DSM 13 / JCM 2505 / CCUG 7422 / NBRC 12200 / NCIMB 9375 / NCTC 10341 / NRRL NRS-1264 / Gibson 46), this protein is Probable cytosol aminopeptidase.